The sequence spans 480 residues: Glycogen synthase (480 aa).

K15 is a binding site for ADP-alpha-D-glucose.

This sequence belongs to the glycosyltransferase 1 family. Bacterial/plant glycogen synthase subfamily.

It catalyses the reaction [(1-&gt;4)-alpha-D-glucosyl](n) + ADP-alpha-D-glucose = [(1-&gt;4)-alpha-D-glucosyl](n+1) + ADP + H(+). The protein operates within glycan biosynthesis; glycogen biosynthesis. In terms of biological role, synthesizes alpha-1,4-glucan chains using ADP-glucose. The protein is Glycogen synthase of Granulibacter bethesdensis (strain ATCC BAA-1260 / CGDNIH1).